We begin with the raw amino-acid sequence, 67 residues long: Brevinin-1CDYc (67 aa).

Positions 1–22 are cleaved as a signal peptide; that stretch reads MFTLKKSLLLIFFLGTINLSLC. Residues 23-45 constitute a propeptide that is removed on maturation; sequence EEERNADEEERRDDPEERDVEVE. C61 and C67 are disulfide-bonded.

This sequence belongs to the frog skin active peptide (FSAP) family. Brevinin subfamily. In terms of tissue distribution, expressed by the skin glands.

It localises to the secreted. In terms of biological role, antimicrobial peptide. The chain is Brevinin-1CDYc from Rana huanrensis (Huanren frog).